A 357-amino-acid polypeptide reads, in one-letter code: Putative F-box protein At5g50220 (357 aa).

Residues 27–73 form the F-box domain; that stretch reads IAEDIGIPIDLMVEILKKLPAKSLIKFQCVSKQWSSIIGSSRDFIDS.

The chain is Putative F-box protein At5g50220 from Arabidopsis thaliana (Mouse-ear cress).